The following is a 339-amino-acid chain: MNNWKHNHVLDLSTFSLEDYKTVLELTTRFKDVHKSSSKKLPALHGRLIANLFFEPSTRTRTSFELAAKRLSADVQNFSVSSSSLSKGETPLDTILTYISMGADILVIRHESTNVPAELANYVDINNINTSILNAGDGFHSHPSQGLLDLFTLATFFNPNEPSTNSLLNKKITIVGDILHSRVARSNLWALTACGAEVTLCGPPSLLPEEFIDFVQNPRLGQNFDPINKRGSVFIKRSLKDALKNSDAVMTLRLQKERMKQNMLKDLDSYYAQYGITHESLKWCEKKVPVLHPGPVNRGVEISNRLVEDNSINLISKQVENGIPTRMALLYLLGLNKKD.

The carbamoyl phosphate site is built by arginine 59 and threonine 60. Lysine 87 contributes to the L-aspartate binding site. Carbamoyl phosphate is bound by residues arginine 109, histidine 142, and glutamine 145. 2 residues coordinate L-aspartate: arginine 182 and arginine 253. Glycine 294 and proline 295 together coordinate carbamoyl phosphate.

Belongs to the aspartate/ornithine carbamoyltransferase superfamily. ATCase family. In terms of assembly, heterododecamer (2C3:3R2) of six catalytic PyrB chains organized as two trimers (C3), and six regulatory PyrI chains organized as three dimers (R2).

It carries out the reaction carbamoyl phosphate + L-aspartate = N-carbamoyl-L-aspartate + phosphate + H(+). The protein operates within pyrimidine metabolism; UMP biosynthesis via de novo pathway; (S)-dihydroorotate from bicarbonate: step 2/3. Functionally, catalyzes the condensation of carbamoyl phosphate and aspartate to form carbamoyl aspartate and inorganic phosphate, the committed step in the de novo pyrimidine nucleotide biosynthesis pathway. This Prochlorococcus marinus (strain NATL1A) protein is Aspartate carbamoyltransferase catalytic subunit.